The following is a 337-amino-acid chain: tRNA N6-adenosine threonylcarbamoyltransferase (337 aa).

Fe cation is bound by residues H111 and H115. Substrate contacts are provided by residues 134–138 (LVSGG), D167, G180, and N272. D300 is a Fe cation binding site.

Belongs to the KAE1 / TsaD family. Fe(2+) serves as cofactor.

The protein localises to the cytoplasm. The enzyme catalyses L-threonylcarbamoyladenylate + adenosine(37) in tRNA = N(6)-L-threonylcarbamoyladenosine(37) in tRNA + AMP + H(+). Functionally, required for the formation of a threonylcarbamoyl group on adenosine at position 37 (t(6)A37) in tRNAs that read codons beginning with adenine. Is involved in the transfer of the threonylcarbamoyl moiety of threonylcarbamoyl-AMP (TC-AMP) to the N6 group of A37, together with TsaE and TsaB. TsaD likely plays a direct catalytic role in this reaction. The polypeptide is tRNA N6-adenosine threonylcarbamoyltransferase (Shewanella woodyi (strain ATCC 51908 / MS32)).